The primary structure comprises 86 residues: Large ribosomal subunit protein bL31B (86 aa).

It belongs to the bacterial ribosomal protein bL31 family. Type B subfamily. Part of the 50S ribosomal subunit.

This Ralstonia pickettii (strain 12J) protein is Large ribosomal subunit protein bL31B.